Consider the following 516-residue polypeptide: Rho guanine nucleotide exchange factor 9 (516 aa).

An SH3 domain is found at 8–67 (DSIVSAEAVWDHVTMANRELAFKAGDVIKVLDASNKDWWWGQIDDEEGWFPASFVRLWVN). Positions 100-110 (RDQMRANVINE) are interaction with GPHN. Residues 103–287 (MRANVINEIM…RNVTQQINER (185 aa)) form the DH domain. Positions 318–425 (ELIYTGEMAW…WLRAFREERK (108 aa)) constitute a PH domain. Residues 453–480 (PKQKGVNSARSVPPSYPPPQDPLNHGQY) form a disordered region. At S502 the chain carries Phosphoserine.

Interacts with GPHN. Detected in brain. Detected at low levels in heart.

The protein localises to the cytoplasm. It localises to the postsynaptic density. Functionally, acts as a guanine nucleotide exchange factor (GEF) for CDC42. Promotes formation of GPHN clusters. This is Rho guanine nucleotide exchange factor 9 (ARHGEF9) from Homo sapiens (Human).